The chain runs to 569 residues: Dihydroxy-acid dehydratase (569 aa).

Cysteine 61 contributes to the [2Fe-2S] cluster binding site. Position 93 (aspartate 93) interacts with Mg(2+). Cysteine 134 contributes to the [2Fe-2S] cluster binding site. Aspartate 135 and lysine 136 together coordinate Mg(2+). An N6-carboxylysine modification is found at lysine 136. Cysteine 211 is a binding site for [2Fe-2S] cluster. Mg(2+) is bound at residue glutamate 462. Serine 488 (proton acceptor) is an active-site residue.

This sequence belongs to the IlvD/Edd family. As to quaternary structure, homodimer. [2Fe-2S] cluster serves as cofactor. The cofactor is Mg(2+).

It carries out the reaction (2R)-2,3-dihydroxy-3-methylbutanoate = 3-methyl-2-oxobutanoate + H2O. The catalysed reaction is (2R,3R)-2,3-dihydroxy-3-methylpentanoate = (S)-3-methyl-2-oxopentanoate + H2O. The protein operates within amino-acid biosynthesis; L-isoleucine biosynthesis; L-isoleucine from 2-oxobutanoate: step 3/4. It functions in the pathway amino-acid biosynthesis; L-valine biosynthesis; L-valine from pyruvate: step 3/4. Functions in the biosynthesis of branched-chain amino acids. Catalyzes the dehydration of (2R,3R)-2,3-dihydroxy-3-methylpentanoate (2,3-dihydroxy-3-methylvalerate) into 2-oxo-3-methylpentanoate (2-oxo-3-methylvalerate) and of (2R)-2,3-dihydroxy-3-methylbutanoate (2,3-dihydroxyisovalerate) into 2-oxo-3-methylbutanoate (2-oxoisovalerate), the penultimate precursor to L-isoleucine and L-valine, respectively. This chain is Dihydroxy-acid dehydratase, found in Tropheryma whipplei (strain TW08/27) (Whipple's bacillus).